The chain runs to 183 residues: Ubiquitin-conjugating enzyme E2 H (183 aa).

The UBC core domain maps to 1-150 (MSSPSPGKRR…IKEYIQKYAT (150 aa)). K60 is modified (N6-acetyllysine). C87 functions as the Glycyl thioester intermediate in the catalytic mechanism. The interval 152-183 (EALKEQEEGTGDSSSESSMSDFSEDEAQDMEL) is disordered. A compositionally biased stretch (low complexity) spans 163-172 (DSSSESSMSD). Residues 173–183 (FSEDEAQDMEL) show a composition bias toward acidic residues.

Belongs to the ubiquitin-conjugating enzyme family. In terms of assembly, interacts with MAEA and WDR26, components of the CTLH complex that contains GID4, RANBP9 and/or RANBP10, MKLN1, MAEA, RMND5A (or alternatively its paralog RMND5B), GID8, ARMC8, WDR26 and YPEL5. Post-translationally, autoubiquitinated in vitro in the presence of NEDD4L.

The enzyme catalyses S-ubiquitinyl-[E1 ubiquitin-activating enzyme]-L-cysteine + [E2 ubiquitin-conjugating enzyme]-L-cysteine = [E1 ubiquitin-activating enzyme]-L-cysteine + S-ubiquitinyl-[E2 ubiquitin-conjugating enzyme]-L-cysteine.. The catalysed reaction is S-ubiquitinyl-[E1 ubiquitin-activating enzyme]-L-cysteine + [acceptor protein]-L-lysine = [E1 ubiquitin-activating enzyme]-L-cysteine + N(6)-monoubiquitinyl-[acceptor protein]-L-lysine.. It participates in protein modification; protein ubiquitination. Accepts ubiquitin from the E1 complex and catalyzes its covalent attachment to other proteins. E2 ubiquitin conjugating enzyme that transfers ubiquitin to MAEA, a core component of the CTLH E3 ubiquitin-protein ligase complex. In vitro catalyzes 'Lys-11'- and 'Lys-48'-linked polyubiquitination. Capable, in vitro, to ubiquitinate histone H2A. The sequence is that of Ubiquitin-conjugating enzyme E2 H (UBE2H) from Homo sapiens (Human).